A 436-amino-acid chain; its full sequence is Serine--tRNA ligase (436 aa).

241–243 lines the L-serine pocket; sequence TSE. 272-274 lines the ATP pocket; that stretch reads RAE. Glutamate 295 is an L-serine binding site. 359-362 contacts ATP; it reads EISS. L-serine is bound at residue serine 395.

Belongs to the class-II aminoacyl-tRNA synthetase family. Type-1 seryl-tRNA synthetase subfamily. As to quaternary structure, homodimer. The tRNA molecule binds across the dimer.

It localises to the cytoplasm. The catalysed reaction is tRNA(Ser) + L-serine + ATP = L-seryl-tRNA(Ser) + AMP + diphosphate + H(+). It carries out the reaction tRNA(Sec) + L-serine + ATP = L-seryl-tRNA(Sec) + AMP + diphosphate + H(+). The protein operates within aminoacyl-tRNA biosynthesis; selenocysteinyl-tRNA(Sec) biosynthesis; L-seryl-tRNA(Sec) from L-serine and tRNA(Sec): step 1/1. Functionally, catalyzes the attachment of serine to tRNA(Ser). Is also able to aminoacylate tRNA(Sec) with serine, to form the misacylated tRNA L-seryl-tRNA(Sec), which will be further converted into selenocysteinyl-tRNA(Sec). In Beijerinckia indica subsp. indica (strain ATCC 9039 / DSM 1715 / NCIMB 8712), this protein is Serine--tRNA ligase.